Consider the following 47-residue polypeptide: Large ribosomal subunit protein bL33C (47 aa).

It belongs to the bacterial ribosomal protein bL33 family.

The chain is Large ribosomal subunit protein bL33C from Staphylococcus aureus (strain MRSA252).